A 226-amino-acid polypeptide reads, in one-letter code: Adenylate kinase (226 aa).

11 to 16 (GSGKGT) is a binding site for ATP. The interval 31–64 (SAGEILKHALSVTKFHFNFNTDNMLNQINSGNLV) is NMP. Residues 62–64 (NLV), 90–93 (GFPR), and Q97 contribute to the AMP site. The segment at 127 to 164 (GRQVHIKSGRTYHIKFNPPKLDGIDDITGEKLVIRADD) is LID. ATP-binding positions include R128 and 137–138 (TY). Residues R161 and R172 each coordinate AMP. Q205 is a binding site for ATP.

The protein belongs to the adenylate kinase family. As to quaternary structure, monomer.

Its subcellular location is the cytoplasm. It catalyses the reaction AMP + ATP = 2 ADP. It functions in the pathway purine metabolism; AMP biosynthesis via salvage pathway; AMP from ADP: step 1/1. Its function is as follows. Catalyzes the reversible transfer of the terminal phosphate group between ATP and AMP. Plays an important role in cellular energy homeostasis and in adenine nucleotide metabolism. The sequence is that of Adenylate kinase from Blochmanniella floridana.